A 298-amino-acid chain; its full sequence is Peroxisomal 2,4-dienoyl-CoA reductase [(3E)-enoyl-CoA-producing] (298 aa).

19-24 (GGGSGI) is an NADP(+) binding site. Position 44 (R44) interacts with substrate. D69 provides a ligand contact to NADP(+). Residues R71, F101, and 109–111 (SPN) contribute to the substrate site. NADP(+) is bound by residues K173 and 200 to 206 (PGPIGGT). Residues 279–298 (SRAVEKRSRAKPVGLPTSKL) are disordered. A Microbody targeting signal motif is present at residues 296-298 (SKL).

This sequence belongs to the short-chain dehydrogenases/reductases (SDR) family. 2,4-dienoyl-CoA reductase subfamily.

Its subcellular location is the peroxisome. It carries out the reaction a (2E,4Z)-dienoyl-CoA + NADPH + H(+) = a 4,5-saturated-(3E)-enoyl-CoA + NADP(+). The catalysed reaction is a (2E,4E)-dienoyl-CoA + NADPH + H(+) = a 4,5-saturated-(3E)-enoyl-CoA + NADP(+). In terms of biological role, auxiliary enzyme of beta-oxidation. Participates in the degradation of unsaturated fatty enoyl-CoA esters having double bonds in both even- and odd-numbered positions in peroxisome. Catalyzes the NADP-dependent reduction of 2,4-dienoyl-CoA to yield trans-3-enoyl-CoA. The chain is Peroxisomal 2,4-dienoyl-CoA reductase [(3E)-enoyl-CoA-producing] from Arabidopsis thaliana (Mouse-ear cress).